The chain runs to 355 residues: Protein RecA (355 aa).

Position 65–72 (65–72 (GPESSGKT)) interacts with ATP.

The protein belongs to the RecA family.

It localises to the cytoplasm. In terms of biological role, can catalyze the hydrolysis of ATP in the presence of single-stranded DNA, the ATP-dependent uptake of single-stranded DNA by duplex DNA, and the ATP-dependent hybridization of homologous single-stranded DNAs. It interacts with LexA causing its activation and leading to its autocatalytic cleavage. The chain is Protein RecA from Pseudomonas putida (strain ATCC 47054 / DSM 6125 / CFBP 8728 / NCIMB 11950 / KT2440).